Reading from the N-terminus, the 811-residue chain is Endothelin-converting enzyme 2 (811 aa).

The Cytoplasmic segment spans residues 1–106 (MNVALQELGA…QLLGSRTQLE (106 aa)). The disordered stretch occupies residues 22-64 (LRDEDAPETPVEGGASPDAMEVGKGASPFSPGPSPGMTPGTPR). The helical; Signal-anchor for type II membrane protein transmembrane segment at 107 to 127 (LVLAGASLLLAALLLGCLVAL) threads the bilayer. At 128–811 (GVQYHRDPSH…MNPGQLCEVW (684 aa)) the chain is on the lumenal side. The Peptidase M13 domain occupies 139 to 811 (TCLTEACIRV…MNPGQLCEVW (673 aa)). 5 cysteine pairs are disulfide-bonded: C140/C145, C163/C796, C171/C756, C227/C476, and C685/C808. N-linked (GlcNAc...) asparagine glycans are attached at residues N207, N211, N252, N312, N357, N424, and N580. H648 lines the Zn(2+) pocket. E649 is a catalytic residue. H652 is a binding site for Zn(2+). 2 N-linked (GlcNAc...) asparagine glycosylation sites follow: N673 and N681. E708 provides a ligand contact to Zn(2+). The Proton donor role is filled by D712.

This sequence belongs to the peptidase M13 family. Zn(2+) is required as a cofactor.

The protein localises to the golgi apparatus membrane. It is found in the cytoplasmic vesicle. The protein resides in the secretory vesicle membrane. The enzyme catalyses Hydrolysis of the 21-Trp-|-Val-22 bond in big endothelin to form endothelin 1.. Functionally, converts big endothelin-1 to endothelin-1. Also involved in the processing of various neuroendocrine peptides, including neurotensin, angiotensin I, substance P, proenkephalin-derived peptides, and prodynorphin-derived peptides. May play a role in amyloid-beta processing. The chain is Endothelin-converting enzyme 2 from Homo sapiens (Human).